The following is a 626-amino-acid chain: Basic helix-loop-helix ARNT-like protein 1 (626 aa).

Residues 1 to 60 form a disordered region; it reads MADQRMDISSTISDFMSPGATDLLSSPLGTSGMDCNRKRKGSSTDYQESMDTDKDDPHGR. Serine 17 is modified (phosphoserine; by GSK3-beta). Position 21 is a phosphothreonine; by GSK3-beta (threonine 21). The Nuclear localization signal motif lies at 36 to 41; that stretch reads NRKRKG. The segment covering 51-60 has biased composition (basic and acidic residues); sequence DTDKDDPHGR. The bHLH domain maps to 72 to 125; the sequence is NAREAHSQIEKRRRDKMNSFIDELASLVPTCNAMSRKLDKLTVLRMAVQHMKTL. Phosphoserine is present on serine 78. At serine 90 the chain carries Phosphoserine; by CK2. The short motif at 142–152 is the Nuclear export signal 1 element; the sequence is LSDDELKHLIL. The 73-residue stretch at 143 to 215 folds into the PAS 1 domain; sequence SDDELKHLIL…EQLSSSDTAP (73 aa). Residue lysine 252 forms a Glycyl lysine isopeptide (Lys-Gly) (interchain with G-Cter in SUMO2 and SUMO3) linkage. Residue lysine 259 forms a Glycyl lysine isopeptide (Lys-Gly) (interchain with G-Cter in SUMO); alternate linkage. Lysine 259 participates in a covalent cross-link: Glycyl lysine isopeptide (Lys-Gly) (interchain with G-Cter in SUMO2); alternate. Residues 326–396 enclose the PAS 2 domain; it reads PQPVNGEIRV…ECHRQVLQTR (71 aa). Residues 361–369 carry the Nuclear export signal 2 motif; sequence LAYLPQELL. Positions 401-444 constitute a PAC domain; sequence TNCYKFKIKDGSFITLRSRWFSFMNPWTKEVEYIVSTNTVVLAN. Disordered regions lie at residues 457 to 493 and 510 to 597; these read TASP…AGAG and RGSS…SNDE. The span at 484 to 493 shows a compositional bias: gly residues; that stretch reads IPGGTRAGAG. The segment at 508-588 is interaction with CIART; sequence RIRGSSPSSC…IGIDMIDNDQ (81 aa). The segment covering 511 to 521 has biased composition (low complexity); the sequence is GSSPSSCGSSP. N6-acetyllysine is present on lysine 538.

In terms of assembly, component of the circadian clock oscillator which includes the CRY1/2 proteins, CLOCK or NPAS2, BMAL1 or BMAL2, CSNK1D and/or CSNK1E, TIMELESS and the PER1/2/3 proteins. Forms a heterodimer with CLOCK. The CLOCK-BMAL1 heterodimer is required for E-box-dependent transactivation, for CLOCK nuclear translocation and degradation, and, for phosphorylation of both CLOCK and BMAL1. Part of a nuclear complex which also includes RACK1 and PRKCA; RACK1 and PRKCA are recruited to the complex in a circadian manner. Interacts with NPAS2. Interacts with EZH2. Interacts with SUMO3. Interacts with SIRT1. Interacts with AHR. Interacts with ID1, ID2 and ID3. Interacts with DDX4. Interacts with OGT. Interacts with EED and SUZ12. Interacts with MTA1. Interacts with CIART. Interacts with HSP90. Interacts with KAT2B and EP300. Interacts with BHLHE40/DEC1 and BHLHE41/DEC2. Interacts with RELB and the interaction is enhanced in the presence of CLOCK. Interacts with PER1, PER2, CRY1 and CRY2 and this interaction requires a translocation to the nucleus. Interaction of the CLOCK-BMAL1 heterodimer with PER or CRY inhibits transcription activation. Interaction of the CLOCK-BMAL1 with CRY1 is independent of DNA but with PER2 is off DNA. The CLOCK-BMAL1 heterodimer interacts with GSK3B. Interacts with KDM5A. Interacts with KMT2A; in a circadian manner. Interacts with UBE3A. Interacts with PRKCG. Interacts with MAGEL2. Interacts with NCOA2. Interacts with THRAP3. The CLOCK-BMAL1 heterodimer interacts with PASD1. Interacts with PASD1. Interacts with USP9X. Interacts with PIWIL2 (via PIWI domain). Interacts with HDAC3. Interacts with HNF4A. Post-translationally, ubiquitinated, leading to its proteasomal degradation. Deubiquitinated by USP9X. O-glycosylated; contains O-GlcNAc. O-glycosylation by OGT prevents protein degradation by inhibiting ubiquitination. It also stabilizes the CLOCK-BMAL1 heterodimer thereby increasing CLOCK-BMAL1-mediated transcription of genes in the negative loop of the circadian clock such as PER1/2/3 and CRY1/2. In terms of processing, acetylated on Lys-538 by CLOCK during the repression phase of the circadian cycle. Acetylation facilitates recruitment of CRY1 protein and initiates the repression phase of the circadian cycle. Acetylated at Lys-538 by KAT5 during the activation phase of the cycle, leading to recruitment of the positive transcription elongation factor b (P-TEFb) and BRD4, followed by productive elongation of circadian transcripts. Deacetylated by SIRT1, which may result in decreased protein stability. Post-translationally, phosphorylated upon dimerization with CLOCK. Phosphorylation enhances the transcriptional activity, alters the subcellular localization and decreases the stability of the CLOCK-BMAL1 heterodimer by promoting its degradation. Phosphorylation shows circadian variations in the liver with a peak between CT10 to CT14. Phosphorylation at Ser-90 by CK2 is essential for its nuclear localization, its interaction with CLOCK and controls CLOCK nuclear entry. Dephosphorylation at Ser-78 is important for dimerization with CLOCK and transcriptional activity. Sumoylated on Lys-259 upon dimerization with CLOCK. Predominantly conjugated to poly-SUMO2/3 rather than SUMO1 and the level of these conjugates undergo rhythmic variation, peaking at CT9-CT12. Sumoylation localizes it exclusively to the PML body and promotes its ubiquitination in the PML body, ubiquitin-dependent proteasomal degradation and the transcriptional activity of the CLOCK-BMAL1 heterodimer. In terms of processing, undergoes lysosome-mediated degradation in a time-dependent manner in the liver.

Its subcellular location is the nucleus. The protein localises to the cytoplasm. It is found in the PML body. Functionally, transcriptional activator which forms a core component of the circadian clock. The circadian clock, an internal time-keeping system, regulates various physiological processes through the generation of approximately 24 hour circadian rhythms in gene expression, which are translated into rhythms in metabolism and behavior. It is derived from the Latin roots 'circa' (about) and 'diem' (day) and acts as an important regulator of a wide array of physiological functions including metabolism, sleep, body temperature, blood pressure, endocrine, immune, cardiovascular, and renal function. Consists of two major components: the central clock, residing in the suprachiasmatic nucleus (SCN) of the brain, and the peripheral clocks that are present in nearly every tissue and organ system. Both the central and peripheral clocks can be reset by environmental cues, also known as Zeitgebers (German for 'timegivers'). The predominant Zeitgeber for the central clock is light, which is sensed by retina and signals directly to the SCN. The central clock entrains the peripheral clocks through neuronal and hormonal signals, body temperature and feeding-related cues, aligning all clocks with the external light/dark cycle. Circadian rhythms allow an organism to achieve temporal homeostasis with its environment at the molecular level by regulating gene expression to create a peak of protein expression once every 24 hours to control when a particular physiological process is most active with respect to the solar day. Transcription and translation of core clock components (CLOCK, NPAS2, BMAL1, BMAL2, PER1, PER2, PER3, CRY1 and CRY2) plays a critical role in rhythm generation, whereas delays imposed by post-translational modifications (PTMs) are important for determining the period (tau) of the rhythms (tau refers to the period of a rhythm and is the length, in time, of one complete cycle). A diurnal rhythm is synchronized with the day/night cycle, while the ultradian and infradian rhythms have a period shorter and longer than 24 hours, respectively. Disruptions in the circadian rhythms contribute to the pathology of cardiovascular diseases, cancer, metabolic syndromes and aging. A transcription/translation feedback loop (TTFL) forms the core of the molecular circadian clock mechanism. Transcription factors, CLOCK or NPAS2 and BMAL1 or BMAL2, form the positive limb of the feedback loop, act in the form of a heterodimer and activate the transcription of core clock genes and clock-controlled genes (involved in key metabolic processes), harboring E-box elements (5'-CACGTG-3') within their promoters. The core clock genes: PER1/2/3 and CRY1/2 which are transcriptional repressors form the negative limb of the feedback loop and interact with the CLOCK|NPAS2-BMAL1|BMAL2 heterodimer inhibiting its activity and thereby negatively regulating their own expression. This heterodimer also activates nuclear receptors NR1D1, NR1D2, RORA, RORB and RORG, which form a second feedback loop and which activate and repress BMAL1 transcription, respectively. BMAL1 positively regulates myogenesis and negatively regulates adipogenesis via the transcriptional control of the genes of the canonical Wnt signaling pathway. Plays a role in normal pancreatic beta-cell function; regulates glucose-stimulated insulin secretion via the regulation of antioxidant genes NFE2L2/NRF2 and its targets SESN2, PRDX3, CCLC and CCLM. Negatively regulates the mTORC1 signaling pathway; regulates the expression of MTOR and DEPTOR. Controls diurnal oscillations of Ly6C inflammatory monocytes; rhythmic recruitment of the PRC2 complex imparts diurnal variation to chemokine expression that is necessary to sustain Ly6C monocyte rhythms. Regulates the expression of HSD3B2, STAR, PTGS2, CYP11A1, CYP19A1 and LHCGR in the ovary and also the genes involved in hair growth. Plays an important role in adult hippocampal neurogenesis by regulating the timely entry of neural stem/progenitor cells (NSPCs) into the cell cycle and the number of cell divisions that take place prior to cell-cycle exit. Regulates the circadian expression of CIART. The CLOCK-BMAL1 heterodimer regulates the circadian expression of SERPINE1/PAI1, VWF, B3, CCRN4L/NOC, NAMPT, DBP, MYOD1, PPARGC1A, PPARGC1B, SIRT1, GYS2, F7, NGFR, GNRHR, BHLHE40/DEC1, ATF4, MTA1 and also genes implicated in glucose and lipid metabolism. Promotes rhythmic chromatin opening, regulating the DNA accessibility of other transcription factors. The NPAS2-BMAL1 heterodimer positively regulates the expression of MAOA, F7 and LDHA and modulates the circadian rhythm of daytime contrast sensitivity by regulating the rhythmic expression of adenylate cyclase type 1 (ADCY1) in the retina. The preferred binding motif for the CLOCK-BMAL1 heterodimer is 5'-CACGTGA-3', which contains a flanking adenine nucleotide at the 3-prime end of the canonical 6-nucleotide E-box sequence. CLOCK specifically binds to the half-site 5'-CAC-3', while BMAL1 binds to the half-site 5'-GTGA-3'. The CLOCK-BMAL1 heterodimer also recognizes the non-canonical E-box motifs 5'-AACGTGA-3' and 5'-CATGTGA-3'. Essential for the rhythmic interaction of CLOCK with ASS1 and plays a critical role in positively regulating CLOCK-mediated acetylation of ASS1. Plays a role in protecting against lethal sepsis by limiting the expression of immune checkpoint protein CD274 in macrophages in a PKM2-dependent manner. Regulates the diurnal rhythms of skeletal muscle metabolism via transcriptional activation of genes promoting triglyceride synthesis (DGAT2) and metabolic efficiency (COQ10B). The sequence is that of Basic helix-loop-helix ARNT-like protein 1 (BMAL1) from Equus caballus (Horse).